The primary structure comprises 195 residues: CASP-like protein 1B1 (195 aa).

Topologically, residues 1–22 (MGLQNEEKLELGCTGLQPKPKK) are cytoplasmic. A helical transmembrane segment spans residues 23 to 43 (WVLLMVRVVAFLATAAATLVM). The Extracellular segment spans residues 44-75 (ALNKETKTLVVATVGNTPIKVTLTAKFQHTPA). Residues 76–96 (FVFFVIANGMASFHNLLMIMV) traverse the membrane as a helical segment. At 97–109 (ELCGQKLDYKGMR) the chain is on the cytoplasmic side. Residues 110–130 (LAMVAILDMMTVALVSGGASA) traverse the membrane as a helical segment. The Extracellular segment spans residues 131–163 (ATFMAELGKNGNSHARWDKICDKFETFCDHGGA). The helical transmembrane segment at 164-184 (ALIASSAGLILMMIISVMSIM) threads the bilayer. The Cytoplasmic portion of the chain corresponds to 185–195 (KLLIKPKSDSS).

It belongs to the Casparian strip membrane proteins (CASP) family. As to quaternary structure, homodimer and heterodimers.

It localises to the cell membrane. The polypeptide is CASP-like protein 1B1 (Populus trichocarpa (Western balsam poplar)).